We begin with the raw amino-acid sequence, 388 residues long: Succinate--CoA ligase [ADP-forming] subunit beta (388 aa).

An ATP-grasp domain is found at 9–244 (KQLFARYGLP…QSQEDPREAQ (236 aa)). Residues lysine 46, 53-55 (GRG), glutamate 99, threonine 102, and glutamate 107 contribute to the ATP site. 2 residues coordinate Mg(2+): asparagine 199 and aspartate 213. Substrate-binding positions include asparagine 264 and 321-323 (GIV).

This sequence belongs to the succinate/malate CoA ligase beta subunit family. As to quaternary structure, heterotetramer of two alpha and two beta subunits. Mg(2+) is required as a cofactor.

It catalyses the reaction succinate + ATP + CoA = succinyl-CoA + ADP + phosphate. The enzyme catalyses GTP + succinate + CoA = succinyl-CoA + GDP + phosphate. The protein operates within carbohydrate metabolism; tricarboxylic acid cycle; succinate from succinyl-CoA (ligase route): step 1/1. In terms of biological role, succinyl-CoA synthetase functions in the citric acid cycle (TCA), coupling the hydrolysis of succinyl-CoA to the synthesis of either ATP or GTP and thus represents the only step of substrate-level phosphorylation in the TCA. The beta subunit provides nucleotide specificity of the enzyme and binds the substrate succinate, while the binding sites for coenzyme A and phosphate are found in the alpha subunit. This is Succinate--CoA ligase [ADP-forming] subunit beta from Shigella boydii serotype 18 (strain CDC 3083-94 / BS512).